The sequence spans 350 residues: RNA 3'-terminal phosphate cyclase (350 aa).

Residues Q107 and 290 to 294 (FLGDQ) each bind ATP. Residue H316 is the Tele-AMP-histidine intermediate of the active site.

The protein belongs to the RNA 3'-terminal cyclase family. Type 1 subfamily.

The protein resides in the cytoplasm. It catalyses the reaction a 3'-end 3'-phospho-ribonucleotide-RNA + ATP = a 3'-end 2',3'-cyclophospho-ribonucleotide-RNA + AMP + diphosphate. Functionally, catalyzes the conversion of 3'-phosphate to a 2',3'-cyclic phosphodiester at the end of RNA. The mechanism of action of the enzyme occurs in 3 steps: (A) adenylation of the enzyme by ATP; (B) transfer of adenylate to an RNA-N3'P to produce RNA-N3'PP5'A; (C) and attack of the adjacent 2'-hydroxyl on the 3'-phosphorus in the diester linkage to produce the cyclic end product. The biological role of this enzyme is unknown but it is likely to function in some aspects of cellular RNA processing. This chain is RNA 3'-terminal phosphate cyclase, found in Gloeothece citriformis (strain PCC 7424) (Cyanothece sp. (strain PCC 7424)).